The sequence spans 335 residues: MAPAQQSRVLRCCSCHIFQAHQVKKSLKWTCKACGEKQSFVRAYGEGSGADCRRHVQKLNLLQGQVSELSLRSVEEAVNGSEEENAGPLQAEAGSQQAPSKPLESRWLKYLDKGCEDQELDRGRPALKTQLSTSAERPSSPAQPRKRKWNQRTGQPAHSLHGQGVDSVEDNFEHQDSTGLFGTEQQGTSPALSTANHTRELGFPRWKLPSPVTQVNAPSSKWARFLLAPGNSPQVDEKPSPLQEATMLADLAQGTVENKTPVEGHFSRAPAIRPPQAIHTTTPQLDRPDRKTREQPRDMGTPRADGRPLAQGTQKAPPLQLHNLFTTGEDFDDDL.

2 disordered regions span residues 75-102 and 118-194; these read EEAV…PSKP and QELD…ALST. The residue at position 100 (serine 100) is a Phosphoserine. Residues 129-142 show a composition bias toward polar residues; that stretch reads TQLSTSAERPSSPA. The Nuclear localization signal (NLS) motif lies at 145 to 148; that stretch reads RKRK. The segment covering 177–194 has biased composition (polar residues); sequence STGLFGTEQQGTSPALST. The interval 203–230 is necessary for the association with the MRN complex; sequence FPRWKLPSPVTQVNAPSSKWARFLLAPG. Positions 273 to 335 are disordered; the sequence is RPPQAIHTTT…TTGEDFDDDL (63 aa). Positions 286–297 are enriched in basic and acidic residues; that stretch reads DRPDRKTREQPR.

Belongs to the MRNIP family. Associates with the MRE11-RAD50-NBN (MRN) damage-sensing complex; this association is constitutive. Interacts with MRE11. Interacts with NBN. Interacts with RAD50. In terms of processing, phosphorylated; phosphorylation is constitutive and occurs in the absence of any DNA-damaging stimulus. Phosphorylation is necessary for its nuclear retention.

It is found in the nucleus. It localises to the nucleoplasm. Its function is as follows. Plays a role in the cellular response to DNA damage and the maintenance of genome stability through its association with the MRN damage-sensing complex. Promotes chromatin loading and activity of the MRN complex to facilitate subsequent ATM-mediated DNA damage response signaling and DNA repair. This chain is MRN complex-interacting protein, found in Mus musculus (Mouse).